The primary structure comprises 307 residues: 2-dehydropantoate 2-reductase (307 aa).

Residues Gly-7–Gly-12, Asn-102, and Ala-128 contribute to the NADP(+) site. A substrate-binding site is contributed by Asn-102. The active-site Proton donor is the Lys-184. Positions 188, 192, and 255 each coordinate substrate. Glu-268 contributes to the NADP(+) binding site.

This sequence belongs to the ketopantoate reductase family.

It localises to the cytoplasm. The enzyme catalyses (R)-pantoate + NADP(+) = 2-dehydropantoate + NADPH + H(+). It participates in cofactor biosynthesis; (R)-pantothenate biosynthesis; (R)-pantoate from 3-methyl-2-oxobutanoate: step 2/2. Functionally, catalyzes the NADPH-dependent reduction of ketopantoate into pantoic acid. The sequence is that of 2-dehydropantoate 2-reductase (apbA) from Streptococcus pyogenes serotype M6 (strain ATCC BAA-946 / MGAS10394).